Here is a 334-residue protein sequence, read N- to C-terminus: Glyceraldehyde-3-phosphate dehydrogenase (334 aa).

NAD(+)-binding positions include R12 to I13, D35, R79, and S121. D-glyceraldehyde 3-phosphate contacts are provided by residues S152–T154, T183, R198, T211–G212, and R234. C153 functions as the Nucleophile in the catalytic mechanism. N315 is an NAD(+) binding site.

Belongs to the glyceraldehyde-3-phosphate dehydrogenase family. In terms of assembly, homotetramer.

It is found in the cytoplasm. The enzyme catalyses D-glyceraldehyde 3-phosphate + phosphate + NAD(+) = (2R)-3-phospho-glyceroyl phosphate + NADH + H(+). It participates in carbohydrate degradation; glycolysis; pyruvate from D-glyceraldehyde 3-phosphate: step 1/5. Functionally, catalyzes the oxidative phosphorylation of glyceraldehyde 3-phosphate (G3P) to 1,3-bisphosphoglycerate (BPG) using the cofactor NAD. The first reaction step involves the formation of a hemiacetal intermediate between G3P and a cysteine residue, and this hemiacetal intermediate is then oxidized to a thioester, with concomitant reduction of NAD to NADH. The reduced NADH is then exchanged with the second NAD, and the thioester is attacked by a nucleophilic inorganic phosphate to produce BPG. In Corynebacterium glutamicum (strain ATCC 13032 / DSM 20300 / JCM 1318 / BCRC 11384 / CCUG 27702 / LMG 3730 / NBRC 12168 / NCIMB 10025 / NRRL B-2784 / 534), this protein is Glyceraldehyde-3-phosphate dehydrogenase (gap).